A 647-amino-acid polypeptide reads, in one-letter code: Exoribonuclease 2 (647 aa).

In terms of domain architecture, RNB spans 191 to 517; that stretch reads REDLCALPFV…VNHRLLKALI (327 aa). Residues 563-645 enclose the S1 motif domain; that stretch reads PTPFNAEIID…DTRSLIARPF (83 aa).

The protein belongs to the RNR ribonuclease family. RNase II subfamily.

It is found in the cytoplasm. The enzyme catalyses Exonucleolytic cleavage in the 3'- to 5'-direction to yield nucleoside 5'-phosphates.. Functionally, involved in mRNA degradation. Hydrolyzes single-stranded polyribonucleotides processively in the 3' to 5' direction. The chain is Exoribonuclease 2 from Edwardsiella piscicida.